We begin with the raw amino-acid sequence, 314 residues long: 4-hydroxy-3-methylbut-2-enyl diphosphate reductase (314 aa).

Residue Cys12 coordinates [4Fe-4S] cluster. His41 and His74 together coordinate (2E)-4-hydroxy-3-methylbut-2-enyl diphosphate. 2 residues coordinate dimethylallyl diphosphate: His41 and His74. His41 and His74 together coordinate isopentenyl diphosphate. Cys96 is a [4Fe-4S] cluster binding site. His124 is a (2E)-4-hydroxy-3-methylbut-2-enyl diphosphate binding site. His124 contacts dimethylallyl diphosphate. His124 lines the isopentenyl diphosphate pocket. Glu126 functions as the Proton donor in the catalytic mechanism. Thr167 provides a ligand contact to (2E)-4-hydroxy-3-methylbut-2-enyl diphosphate. [4Fe-4S] cluster is bound at residue Cys197. Positions 225, 226, 227, and 269 each coordinate (2E)-4-hydroxy-3-methylbut-2-enyl diphosphate. Ser225, Ser226, Asn227, and Ser269 together coordinate dimethylallyl diphosphate. Isopentenyl diphosphate is bound by residues Ser225, Ser226, Asn227, and Ser269.

It belongs to the IspH family. [4Fe-4S] cluster serves as cofactor.

It carries out the reaction isopentenyl diphosphate + 2 oxidized [2Fe-2S]-[ferredoxin] + H2O = (2E)-4-hydroxy-3-methylbut-2-enyl diphosphate + 2 reduced [2Fe-2S]-[ferredoxin] + 2 H(+). The enzyme catalyses dimethylallyl diphosphate + 2 oxidized [2Fe-2S]-[ferredoxin] + H2O = (2E)-4-hydroxy-3-methylbut-2-enyl diphosphate + 2 reduced [2Fe-2S]-[ferredoxin] + 2 H(+). It participates in isoprenoid biosynthesis; dimethylallyl diphosphate biosynthesis; dimethylallyl diphosphate from (2E)-4-hydroxy-3-methylbutenyl diphosphate: step 1/1. Its pathway is isoprenoid biosynthesis; isopentenyl diphosphate biosynthesis via DXP pathway; isopentenyl diphosphate from 1-deoxy-D-xylulose 5-phosphate: step 6/6. Catalyzes the conversion of 1-hydroxy-2-methyl-2-(E)-butenyl 4-diphosphate (HMBPP) into a mixture of isopentenyl diphosphate (IPP) and dimethylallyl diphosphate (DMAPP). Acts in the terminal step of the DOXP/MEP pathway for isoprenoid precursor biosynthesis. In Haemophilus influenzae (strain PittGG), this protein is 4-hydroxy-3-methylbut-2-enyl diphosphate reductase.